Here is a 260-residue protein sequence, read N- to C-terminus: Snake venom serine protease KN14 (260 aa).

Positions 1-18 (MVLIRVLANLLILQLSYA) are cleaved as a signal peptide. The propeptide occupies 19 to 24 (QKSSEL). Positions 25-251 (VIGGDECNIN…HLDWIQSIIA (227 aa)) constitute a Peptidase S1 domain. 5 disulfides stabilise this stretch: C31–C165, C100–C258, C144–C212, C176–C191, and C202–C227. The active-site Charge relay system is H67. N105 is a glycosylation site (N-linked (GlcNAc...) asparagine). D112 (charge relay system) is an active-site residue. An N-linked (GlcNAc...) asparagine glycan is attached at N172. S206 functions as the Charge relay system in the catalytic mechanism. N-linked (GlcNAc...) asparagine glycans are attached at residues N213 and N255.

This sequence belongs to the peptidase S1 family. Snake venom subfamily. Monomer. Expressed by the venom gland.

The protein resides in the secreted. Its function is as follows. Snake venom serine protease that may act in the hemostasis system of the prey. This chain is Snake venom serine protease KN14, found in Trimeresurus stejnegeri (Chinese green tree viper).